Here is a 252-residue protein sequence, read N- to C-terminus: Ribosome assembly factor mrt4 (252 aa).

Belongs to the universal ribosomal protein uL10 family. Associates with the pre-60S ribosomal particle.

The protein localises to the nucleus. Its subcellular location is the nucleolus. The protein resides in the cytoplasm. Its function is as follows. Component of the ribosome assembly machinery. Nuclear paralog of the ribosomal protein P0, it binds pre-60S subunits at an early stage of assembly in the nucleolus, and is replaced by P0 in cytoplasmic pre-60S subunits and mature 80S ribosomes. The chain is Ribosome assembly factor mrt4 from Neurospora crassa (strain ATCC 24698 / 74-OR23-1A / CBS 708.71 / DSM 1257 / FGSC 987).